The chain runs to 67 residues: MPEITVSMAEGRTDEQKAGMMRDITQALVKNLGVDADAVVIQINEAPLRHKMKGGKTFVERAAAAKK.

Pro2 functions as the Proton acceptor; via imino nitrogen in the catalytic mechanism.

It belongs to the 4-oxalocrotonate tautomerase family.

This chain is Probable tautomerase bsl7456, found in Bradyrhizobium diazoefficiens (strain JCM 10833 / BCRC 13528 / IAM 13628 / NBRC 14792 / USDA 110).